Consider the following 603-residue polypeptide: NADH-quinone oxidoreductase subunit C/D (603 aa).

An NADH dehydrogenase I subunit C region spans residues 1–193 (MVNNMTDLTA…DPFTLTKQKE (193 aa)). An NADH dehydrogenase I subunit D region spans residues 217–603 (DFMFLNLGPN…IDFVMSDVDR (387 aa)).

In the N-terminal section; belongs to the complex I 30 kDa subunit family. It in the C-terminal section; belongs to the complex I 49 kDa subunit family. As to quaternary structure, NDH-1 is composed of 13 different subunits. Subunits NuoB, CD, E, F, and G constitute the peripheral sector of the complex.

It is found in the cell inner membrane. The enzyme catalyses a quinone + NADH + 5 H(+)(in) = a quinol + NAD(+) + 4 H(+)(out). NDH-1 shuttles electrons from NADH, via FMN and iron-sulfur (Fe-S) centers, to quinones in the respiratory chain. The immediate electron acceptor for the enzyme in this species is believed to be ubiquinone. Couples the redox reaction to proton translocation (for every two electrons transferred, four hydrogen ions are translocated across the cytoplasmic membrane), and thus conserves the redox energy in a proton gradient. The protein is NADH-quinone oxidoreductase subunit C/D of Cronobacter sakazakii (strain ATCC BAA-894) (Enterobacter sakazakii).